Consider the following 152-residue polypeptide: SKP1-like protein 11 (152 aa).

The segment at 94–152 (ILAANYLNIKSLLDLTCQTVADMIKGKTPEEIRSTFNIENDFTPEEEEAVRKENQWAFE) is interaction with the F-box domain of F-box proteins.

The protein belongs to the SKP1 family. In terms of assembly, part of a SCF (SKP1-cullin-F-box) protein ligase complex. Interacts with ADO3/FKF1, COI1/FBL2, EBF1/FBL6, PP2A13, PP2B10, UFO, SKIP2, SKIP15, SKIP16, SKIP32, CPR1/CPR30, At1g55000, At1g67340, At1g78100, At3g04660, At3g16740, At3g61590, At4g38940 and At5g49610. Expressed in young seedlings, cotyledons, roots, leaves, floral stems, inflorescences, pollen, and siliques, with a slightly higher level in inflorescence than in other tissues.

It is found in the nucleus. The protein operates within protein modification; protein ubiquitination. Functionally, involved in ubiquitination and subsequent proteasomal degradation of target proteins. Together with CUL1, RBX1 and a F-box protein, it forms a SCF E3 ubiquitin ligase complex. The functional specificity of this complex depends on the type of F-box protein. In the SCF complex, it serves as an adapter that links the F-box protein to CUL1. Plays a role during early flowers reproductive development. In Arabidopsis thaliana (Mouse-ear cress), this protein is SKP1-like protein 11 (ASK11).